Reading from the N-terminus, the 253-residue chain is Ribosomal RNA small subunit methyltransferase A (253 aa).

S-adenosyl-L-methionine-binding residues include His-12, Leu-14, Gly-39, Glu-60, Asp-81, and Asn-104.

This sequence belongs to the class I-like SAM-binding methyltransferase superfamily. rRNA adenine N(6)-methyltransferase family. RsmA subfamily.

The protein localises to the cytoplasm. It carries out the reaction adenosine(1518)/adenosine(1519) in 16S rRNA + 4 S-adenosyl-L-methionine = N(6)-dimethyladenosine(1518)/N(6)-dimethyladenosine(1519) in 16S rRNA + 4 S-adenosyl-L-homocysteine + 4 H(+). Specifically dimethylates two adjacent adenosines (A1518 and A1519) in the loop of a conserved hairpin near the 3'-end of 16S rRNA in the 30S particle. May play a critical role in biogenesis of 30S subunits. The protein is Ribosomal RNA small subunit methyltransferase A of Acidovorax ebreus (strain TPSY) (Diaphorobacter sp. (strain TPSY)).